The chain runs to 472 residues: 3-isopropylmalate dehydratase large subunit (472 aa).

Positions 350, 411, and 414 each coordinate [4Fe-4S] cluster.

This sequence belongs to the aconitase/IPM isomerase family. LeuC type 1 subfamily. In terms of assembly, heterodimer of LeuC and LeuD. The cofactor is [4Fe-4S] cluster.

It carries out the reaction (2R,3S)-3-isopropylmalate = (2S)-2-isopropylmalate. The protein operates within amino-acid biosynthesis; L-leucine biosynthesis; L-leucine from 3-methyl-2-oxobutanoate: step 2/4. Catalyzes the isomerization between 2-isopropylmalate and 3-isopropylmalate, via the formation of 2-isopropylmaleate. The polypeptide is 3-isopropylmalate dehydratase large subunit (Alcanivorax borkumensis (strain ATCC 700651 / DSM 11573 / NCIMB 13689 / SK2)).